The chain runs to 260 residues: Pyridoxine 5'-phosphate synthase (260 aa).

Positions 10 and 21 each coordinate 3-amino-2-oxopropyl phosphate. His46 serves as the catalytic Proton acceptor. Residues Arg48 and His53 each coordinate 1-deoxy-D-xylulose 5-phosphate. The active-site Proton acceptor is the Glu76. Thr113 is a 1-deoxy-D-xylulose 5-phosphate binding site. The active-site Proton donor is His204. Residues Asp205 and 227–228 (GH) contribute to the 3-amino-2-oxopropyl phosphate site.

Belongs to the PNP synthase family. In terms of assembly, homooctamer; tetramer of dimers.

It localises to the cytoplasm. The enzyme catalyses 3-amino-2-oxopropyl phosphate + 1-deoxy-D-xylulose 5-phosphate = pyridoxine 5'-phosphate + phosphate + 2 H2O + H(+). It functions in the pathway cofactor biosynthesis; pyridoxine 5'-phosphate biosynthesis; pyridoxine 5'-phosphate from D-erythrose 4-phosphate: step 5/5. Catalyzes the complicated ring closure reaction between the two acyclic compounds 1-deoxy-D-xylulose-5-phosphate (DXP) and 3-amino-2-oxopropyl phosphate (1-amino-acetone-3-phosphate or AAP) to form pyridoxine 5'-phosphate (PNP) and inorganic phosphate. The chain is Pyridoxine 5'-phosphate synthase from Xylella fastidiosa (strain 9a5c).